We begin with the raw amino-acid sequence, 271 residues long: UPF0328 protein ECU09_0020 (271 aa).

It belongs to the UPF0328 family.

The polypeptide is UPF0328 protein ECU09_0020 (Encephalitozoon cuniculi (strain GB-M1) (Microsporidian parasite)).